A 231-amino-acid chain; its full sequence is 7-cyano-7-deazaguanine synthase (231 aa).

8-18 (FSGGQDSTTCL) is an ATP binding site. Zn(2+) is bound by residues cysteine 188, cysteine 197, cysteine 200, and cysteine 203.

This sequence belongs to the QueC family. The cofactor is Zn(2+).

It catalyses the reaction 7-carboxy-7-deazaguanine + NH4(+) + ATP = 7-cyano-7-deazaguanine + ADP + phosphate + H2O + H(+). The protein operates within purine metabolism; 7-cyano-7-deazaguanine biosynthesis. Catalyzes the ATP-dependent conversion of 7-carboxy-7-deazaguanine (CDG) to 7-cyano-7-deazaguanine (preQ(0)). This is 7-cyano-7-deazaguanine synthase from Salmonella agona (strain SL483).